A 132-amino-acid polypeptide reads, in one-letter code: U10-hexatoxin-Hi1a (132 aa).

A signal peptide spans 1 to 20 (MKGFIVFSLSLCLVFTVCLA). The propeptide occupies 21–30 (EDELMKEAVR).

Post-translationally, contains 5 disulfide bonds. As to expression, expressed by the venom gland.

It localises to the secreted. Its function is as follows. Probable ion channel inhibitor. This Hadronyche infensa (Fraser island funnel-web spider) protein is U10-hexatoxin-Hi1a.